The sequence spans 403 residues: Aminomethyltransferase, mitochondrial (403 aa).

Residues 1-28 constitute a mitochondrion transit peptide; sequence MQRAVSVVARLGFRLQAFPPALCRPLSC. Positions 232, 261, and 399 each coordinate substrate.

Belongs to the GcvT family. In terms of assembly, the glycine cleavage system is composed of four proteins: P, T, L and H.

It is found in the mitochondrion. It catalyses the reaction N(6)-[(R)-S(8)-aminomethyldihydrolipoyl]-L-lysyl-[protein] + (6S)-5,6,7,8-tetrahydrofolate = N(6)-[(R)-dihydrolipoyl]-L-lysyl-[protein] + (6R)-5,10-methylene-5,6,7,8-tetrahydrofolate + NH4(+). In terms of biological role, the glycine cleavage system catalyzes the degradation of glycine. The polypeptide is Aminomethyltransferase, mitochondrial (Homo sapiens (Human)).